We begin with the raw amino-acid sequence, 110 residues long: Large ribosomal subunit protein uL22 (110 aa).

This sequence belongs to the universal ribosomal protein uL22 family. As to quaternary structure, part of the 50S ribosomal subunit.

Its function is as follows. This protein binds specifically to 23S rRNA; its binding is stimulated by other ribosomal proteins, e.g. L4, L17, and L20. It is important during the early stages of 50S assembly. It makes multiple contacts with different domains of the 23S rRNA in the assembled 50S subunit and ribosome. The globular domain of the protein is located near the polypeptide exit tunnel on the outside of the subunit, while an extended beta-hairpin is found that lines the wall of the exit tunnel in the center of the 70S ribosome. The chain is Large ribosomal subunit protein uL22 from Pseudomonas savastanoi pv. phaseolicola (strain 1448A / Race 6) (Pseudomonas syringae pv. phaseolicola (strain 1448A / Race 6)).